The chain runs to 383 residues: Proton extrusion protein PxcA (383 aa).

4 helical membrane-spanning segments follow: residues 163-183 (ILLL…AYII), 258-278 (AVKN…VCFA), 306-326 (IILF…TVLL), and 341-361 (FVML…KYWI).

The protein belongs to the CemA family.

It localises to the cell inner membrane. Its function is as follows. Required for H(+) efflux immediately after light irradiation to form a rapid H(+) concentration gradient across the thylakoid membranes. Together with PxcL, contributes to transient H(+) uptake following dark to light transition. This Synechococcus sp. (strain CC9902) protein is Proton extrusion protein PxcA.